Here is a 119-residue protein sequence, read N- to C-terminus: Protein yippee-like 1 (119 aa).

A Yippee domain is found at R19–N116. Positions 23, 26, 79, and 82 each coordinate Zn(2+). The Nuclear localization signal signature appears at K99–K104.

Belongs to the yippee family.

It is found in the nucleus. In terms of biological role, may play a role in epithelioid conversion of fibroblasts. The protein is Protein yippee-like 1 (YPEL1) of Chlorocebus aethiops (Green monkey).